The chain runs to 176 residues: Prepronociceptin (176 aa).

The N-terminal stretch at Met1–Ser19 is a signal peptide. 2 consecutive propeptides follow at residues Ser20–Leu95 and Thr169–Ala176.

Belongs to the opioid neuropeptide precursor family. In terms of processing, specific enzymatic cleavages at paired basic residues probably yield other active peptides besides nociceptin. The N-terminal domain contains 6 conserved cysteines thought to be involved in disulfide bonding and/or processing.

It localises to the secreted. In terms of biological role, ligand of the opioid receptor-like receptor OPRL1. It may act as a transmitter in the brain by modulating nociceptive and locomotor behavior. May be involved in neuronal differentiation and development. Blocks nociceptin action in pain transmission by inhibiting nociceptin-induced hyperalgesia and allodynia. Its function is as follows. Has potent analgesic activity. This chain is Prepronociceptin (PNOC), found in Bos taurus (Bovine).